A 188-amino-acid polypeptide reads, in one-letter code: Augmin complex subunit dgt4 (188 aa).

A coiled-coil region spans residues 141–163 (QREFAQNQEALRSLRTAVDGLEN).

As to quaternary structure, component of the augmin complex composed of dgt2, dgt3, dgt4, dgt5, dgt6, msd1, msd5 and wac. The complex interacts directly or indirectly with microtubules and is required for centrosome-independent generation of spindle microtubules.

It localises to the cytoplasm. It is found in the cytoskeleton. The protein resides in the spindle. In terms of biological role, as part of the augmin complex, plays a role in centrosome-independent generation of spindle microtubules. The complex is required for mitotic spindle assembly through its involvement in localizing gamma-tubulin to spindle microtubules. This is Augmin complex subunit dgt4 from Drosophila melanogaster (Fruit fly).